The chain runs to 127 residues: Small ribosomal subunit protein uS12 (127 aa).

Position 89 is a 3-methylthioaspartic acid (Asp-89).

The protein belongs to the universal ribosomal protein uS12 family. As to quaternary structure, part of the 30S ribosomal subunit. Contacts proteins S8 and S17. May interact with IF1 in the 30S initiation complex.

Its function is as follows. With S4 and S5 plays an important role in translational accuracy. Functionally, interacts with and stabilizes bases of the 16S rRNA that are involved in tRNA selection in the A site and with the mRNA backbone. Located at the interface of the 30S and 50S subunits, it traverses the body of the 30S subunit contacting proteins on the other side and probably holding the rRNA structure together. The combined cluster of proteins S8, S12 and S17 appears to hold together the shoulder and platform of the 30S subunit. The sequence is that of Small ribosomal subunit protein uS12 from Aliarcobacter butzleri (strain RM4018) (Arcobacter butzleri).